Consider the following 253-residue polypeptide: MPRYKLVIEYDGSPFCGWQRQADDPTVQGAIEAAVTRFSGENARLTCAGRTDAGVHAIHQVAHLDLAKDWRTDTVRDALNAHLRPQPVAILSAETVPDSFDARHSAIRRHYRYRILNRRSPAALTRAHVWHVPWPLDADLMHDAAQRLVGRHDFSAFRAAECQANSPIRTLEQLDVARAPMALHDEIVVATAARSFLHHQVRAMVGTLMLAGCRRLAADDVAEILASGDKSRCGPLAPAAGLTFVGVDYDPGK.

Catalysis depends on Asp52, which acts as the Nucleophile. Position 111 (Tyr111) interacts with substrate.

It belongs to the tRNA pseudouridine synthase TruA family. In terms of assembly, homodimer.

The enzyme catalyses uridine(38/39/40) in tRNA = pseudouridine(38/39/40) in tRNA. Formation of pseudouridine at positions 38, 39 and 40 in the anticodon stem and loop of transfer RNAs. The sequence is that of tRNA pseudouridine synthase A from Methylobacterium radiotolerans (strain ATCC 27329 / DSM 1819 / JCM 2831 / NBRC 15690 / NCIMB 10815 / 0-1).